Reading from the N-terminus, the 464-residue chain is tRNA modification GTPase MnmE (464 aa).

Residues Arg-23, Glu-84, and Arg-123 each contribute to the (6S)-5-formyl-5,6,7,8-tetrahydrofolate site. A TrmE-type G domain is found at 216 to 386 (GARATLVGRP…LGATVARLLL (171 aa)). Asn-226 contributes to the K(+) binding site. GTP is bound by residues 226–231 (NAGKSS), 245–251 (TPIPGTT), and 270–273 (DTAG). Ser-230 serves as a coordination point for Mg(2+). Positions 245, 247, and 250 each coordinate K(+). Thr-251 contributes to the Mg(2+) binding site. Lys-464 lines the (6S)-5-formyl-5,6,7,8-tetrahydrofolate pocket.

It belongs to the TRAFAC class TrmE-Era-EngA-EngB-Septin-like GTPase superfamily. TrmE GTPase family. In terms of assembly, homodimer. Heterotetramer of two MnmE and two MnmG subunits. Requires K(+) as cofactor.

It is found in the cytoplasm. Functionally, exhibits a very high intrinsic GTPase hydrolysis rate. Involved in the addition of a carboxymethylaminomethyl (cmnm) group at the wobble position (U34) of certain tRNAs, forming tRNA-cmnm(5)s(2)U34. The chain is tRNA modification GTPase MnmE from Roseiflexus castenholzii (strain DSM 13941 / HLO8).